Consider the following 48-residue polypeptide: Delta-actitoxin-Bcg1b (48 aa).

3 cysteine pairs are disulfide-bonded: C4–C45, C6–C35, and C28–C46.

Belongs to the sea anemone sodium channel inhibitory toxin family. Type I subfamily.

It localises to the secreted. Its subcellular location is the nematocyst. In terms of biological role, binds to the sodium channels Nav1.1/SCN1A (EC(50)=165 nM), Nav1.5/SCN5A (EC(50)=103 nM) and Nav1.6/SCN8A (EC(50)=133 nM), thereby delaying their inactivation. Also inhibits Nav1.2/SCN2A, Nav1.3/SCN3A, and Nav1.4/SCN4A, but to a lesser extent. Inhibits Nav1.5 differently from isoforms Nav1.1 and Nav1.6. In Nav1.5 the effect consists in a right-shift of inactivation; whereas in both Nav1.1 and Nav1.6 the effect consists in an incomplete inactivation. The sequence is that of Delta-actitoxin-Bcg1b from Bunodosoma cangicum (Sea anemone).